We begin with the raw amino-acid sequence, 629 residues long: Sushi domain-containing protein 5 (629 aa).

The N-terminal stretch at 1-35 is a signal peptide; the sequence is MTAEGPSPPARWHRRLPGLWAAALLLLGLPRLSVR. The Extracellular segment spans residues 36 to 574; that stretch reads ADGKFFVLES…DGCPGLSRGP (539 aa). The region spanning 39 to 134 is the Link domain; the sequence is KFFVLESQNG…GGTYSALCIK (96 aa). Intrachain disulfides connect cysteine 61-cysteine 132, cysteine 140-cysteine 184, and cysteine 167-cysteine 197. In terms of domain architecture, Sushi spans 138–199; it reads KPCGDPPSFP…WYGLVQACGK (62 aa). The span at 225–249 shows a compositional bias: basic and acidic residues; that stretch reads EDSRTEADEDRGQGDSSEEAPKQDR. 2 disordered regions span residues 225–252 and 344–403; these read EDSR…RLVS and DGPS…GLDE. A helical transmembrane segment spans residues 575–595; sequence VIATIVTVLCLLLLLAGVGMV. At 596 to 629 the chain is on the cytoplasmic side; sequence WGYRKCQHKSSVYKLNVGQRQARHYHQQIEMEKV.

It is found in the membrane. The protein is Sushi domain-containing protein 5 (SUSD5) of Homo sapiens (Human).